Here is a 349-residue protein sequence, read N- to C-terminus: tRNA pseudouridine synthase D (349 aa).

Position 27 (F27) interacts with substrate. The Nucleophile role is filled by D80. N129 contacts substrate. One can recognise a TRUD domain in the interval 155–303 (GVPNYFGAQR…VEAARRAMLL (149 aa)). F329 serves as a coordination point for substrate.

The protein belongs to the pseudouridine synthase TruD family.

It catalyses the reaction uridine(13) in tRNA = pseudouridine(13) in tRNA. Its function is as follows. Responsible for synthesis of pseudouridine from uracil-13 in transfer RNAs. This chain is tRNA pseudouridine synthase D, found in Escherichia coli O45:K1 (strain S88 / ExPEC).